We begin with the raw amino-acid sequence, 564 residues long: Glutamate--tRNA ligase (564 aa).

Residues 107-117 (PNPNGPPTLGS) carry the 'HIGH' region motif.

Belongs to the class-I aminoacyl-tRNA synthetase family. Glutamate--tRNA ligase type 2 subfamily.

The protein resides in the cytoplasm. The catalysed reaction is tRNA(Glu) + L-glutamate + ATP = L-glutamyl-tRNA(Glu) + AMP + diphosphate. Catalyzes the attachment of glutamate to tRNA(Glu) in a two-step reaction: glutamate is first activated by ATP to form Glu-AMP and then transferred to the acceptor end of tRNA(Glu). In Methanothrix thermoacetophila (strain DSM 6194 / JCM 14653 / NBRC 101360 / PT) (Methanosaeta thermophila), this protein is Glutamate--tRNA ligase.